Consider the following 47-residue polypeptide: Small, acid-soluble spore protein K (47 aa).

The segment at 1-47 (MRNKAHGFPHRISFDGEPDRAKHASKRANGTINTKPQERMHQANPDQ) is disordered. Residues 12-22 (ISFDGEPDRAK) are compositionally biased toward basic and acidic residues.

This sequence belongs to the SspK family.

The protein localises to the spore core. The protein is Small, acid-soluble spore protein K of Halalkalibacterium halodurans (strain ATCC BAA-125 / DSM 18197 / FERM 7344 / JCM 9153 / C-125) (Bacillus halodurans).